Consider the following 256-residue polypeptide: Protein YIPF7 (256 aa).

Over Met-1–Asp-125 the chain is Cytoplasmic. 2 stretches are compositionally biased toward polar residues: residues Ile-18–Tyr-31 and Arg-38–Pro-48. The interval Ile-18 to Pro-48 is disordered. Residues Leu-126–Val-146 form a helical membrane-spanning segment. Position 147 (Gln-147) is a topological domain, extracellular. A helical membrane pass occupies residues Phe-148–Leu-168. Over Met-169–Ser-172 the chain is Cytoplasmic. A helical transmembrane segment spans residues Gly-173–Leu-193. Over Ser-194–Cys-196 the chain is Extracellular. The chain crosses the membrane as a helical span at residues Ala-197–Trp-217. Over Cys-218–Gln-235 the chain is Cytoplasmic. The chain crosses the membrane as a helical span at residues Gln-236–Phe-256.

The protein belongs to the YIP1 family.

It localises to the endoplasmic reticulum membrane. It is found in the golgi apparatus. The protein resides in the cis-Golgi network membrane. The protein localises to the trans-Golgi network membrane. The polypeptide is Protein YIPF7 (YIPF7) (Homo sapiens (Human)).